A 379-amino-acid chain; its full sequence is Thiosulfate/3-mercaptopyruvate sulfurtransferase 1, mitochondrial (379 aa).

A mitochondrion-targeting transit peptide spans Met-1–Arg-56. Residue Ala-57 is modified to N-acetylalanine. Rhodanese domains are found at residues Arg-91–Ser-208 and Glu-259–Glu-373. Residue Cys-333 is the Cysteine persulfide intermediate of the active site.

As to expression, expressed in roots, rosette and cauline leaves, stems, flowers and siliques.

The protein localises to the mitochondrion. The catalysed reaction is thiosulfate + hydrogen cyanide = thiocyanate + sulfite + 2 H(+). The enzyme catalyses 2-oxo-3-sulfanylpropanoate + [thioredoxin]-dithiol = [thioredoxin]-disulfide + hydrogen sulfide + pyruvate + H(+). In terms of biological role, catalyzes the transfer of a sulfur ion from a donor to cyanide or to other thiol compounds. Substrate preference is 3-mercaptopyruvate &gt; thiosulfate. Involved in embryo and seed development. In Arabidopsis thaliana (Mouse-ear cress), this protein is Thiosulfate/3-mercaptopyruvate sulfurtransferase 1, mitochondrial (STR1).